Here is a 262-residue protein sequence, read N- to C-terminus: Putative BTB/POZ domain-containing protein L834 (262 aa).

The region spanning F16–I86 is the BTB domain.

This sequence belongs to the mimivirus BTB/WD family.

In Acanthamoeba polyphaga (Amoeba), this protein is Putative BTB/POZ domain-containing protein L834.